The following is a 518-amino-acid chain: Ribonuclease Y (518 aa).

A helical transmembrane segment spans residues 2–22; that stretch reads VLNILLAIVGLIVGLGLGFVI. The disordered stretch occupies residues 91-119; that stretch reads QREQTLDRKDDSLEKREGSLEEKEEKLGA. The KH domain occupies 208-268; that stretch reads TVSVVTLPND…IRREIARMTL (61 aa). The HD domain maps to 334 to 427; it reads VLNHSIEVAK…VAAADALSAA (94 aa).

This sequence belongs to the RNase Y family.

It localises to the cell membrane. Endoribonuclease that initiates mRNA decay. The protein is Ribonuclease Y of Enterococcus faecalis (strain ATCC 700802 / V583).